A 252-amino-acid polypeptide reads, in one-letter code: MERVLIVNADDFGLSKGQNYGIIEACRNGVVTSTTALVNGAAIDHAAQLGRSTPELAVGMHFVLTLGEPLSAMPGLTRDGRLGKWIWQQAEEDSLPLEEIAHELACQYHRFVELFGHEPTHIDSHHHVHMFAQIYPIVAAFAREKGIALRIDRQVAAQSGLDQQAARSSAGFSSEFYGEAVSEELFLQTLDASIARGERSLEVMCHPAYVDRIIMGSAYCYPRLDELDVLTAASLKAAVADRGYRLGTYRDV.

Residues His61 and His125 each contribute to the Mg(2+) site.

Belongs to the YdjC deacetylase family. ChbG subfamily. In terms of assembly, homodimer. It depends on Mg(2+) as a cofactor.

The protein localises to the cytoplasm. It carries out the reaction N,N'-diacetylchitobiose + H2O = N-acetyl-beta-D-glucosaminyl-(1-&gt;4)-D-glucosamine + acetate. The enzyme catalyses diacetylchitobiose-6'-phosphate + H2O = N'-monoacetylchitobiose-6'-phosphate + acetate. It participates in glycan degradation; chitin degradation. Functionally, involved in the degradation of chitin. ChbG is essential for growth on the acetylated chitooligosaccharides chitobiose and chitotriose but is dispensable for growth on cellobiose and chitosan dimer, the deacetylated form of chitobiose. Deacetylation of chitobiose-6-P and chitotriose-6-P is necessary for both the activation of the chb promoter by the regulatory protein ChbR and the hydrolysis of phosphorylated beta-glucosides by the phospho-beta-glucosidase ChbF. Catalyzes the removal of only one acetyl group from chitobiose-6-P to yield monoacetylchitobiose-6-P, the inducer of ChbR and the substrate of ChbF. The protein is Chitooligosaccharide deacetylase of Klebsiella pneumoniae subsp. pneumoniae (strain ATCC 700721 / MGH 78578).